Here is a 529-residue protein sequence, read N- to C-terminus: Cytochrome P450 monooxygenase fsoB (529 aa).

Residues 4–24 (WLLSLLIAGVVFAIFQLRTVG) traverse the membrane as a helical segment. Cysteine 436 serves as a coordination point for heme.

It belongs to the cytochrome P450 family. Requires heme as cofactor.

Its subcellular location is the membrane. Functionally, cytochrome P450 monooxygenase; part of the gene cluster that mediates the biosynthesis of the enfumafungin-type antibiotic fuscoatroside. Four enzymes are sufficient to produce fuscoatroside: the terpene cyclase-glycosyl transferase fusion protein fsoAthe cytochrome P450 monoxygenases fsoD and fsoE, and the acetyltransferase fsoF; the cytochrome P450 monooxygenase fsoB and the glucose oxidase-like protein fsoC do not seem to play a role in biosynthesis of fuscoatroside. The protein is Cytochrome P450 monooxygenase fsoB of Humicola fuscoatra.